The chain runs to 662 residues: PsbB mRNA maturation factor Mbb1, chloroplastic (662 aa).

Residues 1–50 constitute a chloroplast transit peptide; it reads MSLVPFSQLWRGVRTRGPVEQASSSSSSSSSSRRTWYAPARSQTGVQVAA. Disordered stretches follow at residues 14–38 and 75–101; these read RTRG…TWYA and IIAD…RDEA. The segment covering 23–32 has biased composition (low complexity); that stretch reads SSSSSSSSSS. Residues 88–101 are compositionally biased toward basic and acidic residues; that stretch reads EGERGDATGSRDEA. TPR repeat units follow at residues 126-160, 161-194, 196-229, 231-263, 269-302, 305-338, 339-372, 373-406, 408-440, and 444-477; these read SRIR…DPAD, PRAY…TGNV, PYIW…DGTH, CAWH…CRRK, AYLY…AEGA, VALW…NPRS, RYVH…NPTD, PALY…DPSD, YMWQ…DPRS, and VYVF…DPKS. 2 disordered regions span residues 540–563 and 598–662; these read SDGN…EAAA and LPDF…RSMG.

In terms of assembly, part of a 300 kDa complex that associates with RNA.

The protein localises to the plastid. It is found in the chloroplast stroma. Functionally, involved, directly or indirectly, in the processing of the chloroplast encoded psbB mRNA to its mature form, acting via the 5'-UTR of the psbB mRNA. The polypeptide is PsbB mRNA maturation factor Mbb1, chloroplastic (MBB1) (Chlamydomonas reinhardtii (Chlamydomonas smithii)).